The chain runs to 146 residues: D-aminoacyl-tRNA deacylase (146 aa).

Residues 138–139 carry the Gly-cisPro motif, important for rejection of L-amino acids motif; the sequence is GP.

The protein belongs to the DTD family. In terms of assembly, homodimer.

Its subcellular location is the cytoplasm. The enzyme catalyses glycyl-tRNA(Ala) + H2O = tRNA(Ala) + glycine + H(+). It carries out the reaction a D-aminoacyl-tRNA + H2O = a tRNA + a D-alpha-amino acid + H(+). In terms of biological role, an aminoacyl-tRNA editing enzyme that deacylates mischarged D-aminoacyl-tRNAs. Also deacylates mischarged glycyl-tRNA(Ala), protecting cells against glycine mischarging by AlaRS. Acts via tRNA-based rather than protein-based catalysis; rejects L-amino acids rather than detecting D-amino acids in the active site. By recycling D-aminoacyl-tRNA to D-amino acids and free tRNA molecules, this enzyme counteracts the toxicity associated with the formation of D-aminoacyl-tRNA entities in vivo and helps enforce protein L-homochirality. This chain is D-aminoacyl-tRNA deacylase, found in Xanthomonas euvesicatoria pv. vesicatoria (strain 85-10) (Xanthomonas campestris pv. vesicatoria).